The primary structure comprises 61 residues: uncharacterized protein (61 aa).

This is an uncharacterized protein from Acidianus convivator (ABV).